Consider the following 341-residue polypeptide: Anthranilate phosphoribosyltransferase (341 aa).

5-phospho-alpha-D-ribose 1-diphosphate is bound by residues G79, 82 to 83, T87, 89 to 92, 107 to 115, and S119; these read GD, NIST, and KHGNRAVSS. Position 79 (G79) interacts with anthranilate. S91 serves as a coordination point for Mg(2+). Position 110 (N110) interacts with anthranilate. An anthranilate-binding site is contributed by R165. Residues D224 and E225 each coordinate Mg(2+).

The protein belongs to the anthranilate phosphoribosyltransferase family. In terms of assembly, homodimer. The cofactor is Mg(2+).

It catalyses the reaction N-(5-phospho-beta-D-ribosyl)anthranilate + diphosphate = 5-phospho-alpha-D-ribose 1-diphosphate + anthranilate. It functions in the pathway amino-acid biosynthesis; L-tryptophan biosynthesis; L-tryptophan from chorismate: step 2/5. Its function is as follows. Catalyzes the transfer of the phosphoribosyl group of 5-phosphorylribose-1-pyrophosphate (PRPP) to anthranilate to yield N-(5'-phosphoribosyl)-anthranilate (PRA). This is Anthranilate phosphoribosyltransferase from Bacillus thuringiensis subsp. konkukian (strain 97-27).